A 760-amino-acid polypeptide reads, in one-letter code: MSELNEKLATAWEGFTKGDWQNEVNVRDFIQKNYTPYEGDESFLAGATEATTTLWDKVMEGVKLENRTHAPVDFDTAVASTITSHDAGYINKQLEKIVGLQTEAPLKRALIPFGGIKMIEGSCKAYNRELDPMIKKIFTEYRKTHNQGVFDVYTPDILRCRKSGVLTGLPDAYGRGRIIGDYRRVALYGIDYLMKDKLAQFTSLQADLENGVNLEQTIRLREEIAEQHRALGQMKEMAAKYGYDISGPATNAQEAIQWTYFGYLAAVKSQNGAAMSFGRTSTFLDVYIERDLKAGKITEQEAQEMVDHLVMKLRMVRFLRTPEYDELFSGDPIWATESIGGMGLDGRTLVTKNSFRFLNTLYTMGPSPEPNMTILWSEKLPLNFKKFAAKVSIDTSSLQYENDDLMRPDFNNDDYAIACCVSPMIVGKQMQFFGARANLAKTMLYAINGGVDEKLKMQVGPKSEPIKGDVLNYDEVMERMDHFMDWLAKQYITALNIIHYMHDKYSYEASLMALHDRDVIRTMACGIAGLSVAADSLSAIKYAKVKPIRDEDGLAIDFEIEGEYPQFGNNDPRVDDLAVDLVERFMKKIQKLHTYRDAIPTQSVLTITSNVVYGKKTGNTPDGRRAGAPFGPGANPMHGRDQKGAVASLTSVAKLPFAYAKDGISYTFSIVPNALGKDDEVRKTNLAGLMDGYFHHEASIEGGQHLNVNVMNREMLLDAMENPEKYPQLTIRVSGYAVRFNSLTKEQQQDVITRTFTQSM.

The PFL domain maps to 3–625 (ELNEKLATAW…KTGNTPDGRR (623 aa)). K63 is subject to N6-acetyllysine; alternate. K63 is modified (N6-succinyllysine; alternate). An N6-succinyllysine modification is found at K107. An N6-acetyllysine; alternate modification is found at K117. The residue at position 117 (K117) is an N6-succinyllysine; alternate. K124 bears the N6-succinyllysine mark. K195 bears the N6-acetyllysine; alternate mark. K195 is modified (N6-succinyllysine; alternate). C419 serves as the catalytic S-acetylcysteine intermediate. The Cysteine radical intermediate role is filled by C420. K454 carries the post-translational modification N6-acetyllysine; alternate. At K454 the chain carries N6-succinyllysine; alternate. K467 bears the N6-succinyllysine mark. 2 positions are modified to N6-acetyllysine: K541 and K591. The Glycine radical domain occupies 632-760 (PGANPMHGRD…VITRTFTQSM (129 aa)). K654 bears the N6-succinyllysine mark. G735 carries the glycine radical modification.

Belongs to the glycyl radical enzyme (GRE) family. PFL subfamily. Homodimer. Interacts specifically with FocA.

The protein resides in the cytoplasm. The catalysed reaction is formate + acetyl-CoA = pyruvate + CoA. The protein operates within fermentation; pyruvate fermentation; formate from pyruvate: step 1/1. Catalyzes the conversion of pyruvate to formate and acetyl-CoA. In addition, may be involved in the control of the activity of the formate channel FocA, via direct interaction with FocA. In Escherichia coli (strain K12), this protein is Formate acetyltransferase 1 (pflB).